Reading from the N-terminus, the 275-residue chain is 2,3,4,5-tetrahydropyridine-2,6-dicarboxylate N-succinyltransferase (275 aa).

The substrate site is built by R106 and D143.

Belongs to the transferase hexapeptide repeat family. Homotrimer.

Its subcellular location is the cytoplasm. It catalyses the reaction (S)-2,3,4,5-tetrahydrodipicolinate + succinyl-CoA + H2O = (S)-2-succinylamino-6-oxoheptanedioate + CoA. Its pathway is amino-acid biosynthesis; L-lysine biosynthesis via DAP pathway; LL-2,6-diaminopimelate from (S)-tetrahydrodipicolinate (succinylase route): step 1/3. The polypeptide is 2,3,4,5-tetrahydropyridine-2,6-dicarboxylate N-succinyltransferase (Burkholderia pseudomallei (strain 1106a)).